Reading from the N-terminus, the 725-residue chain is Ophiobolin F synthase (725 aa).

The tract at residues Met-1–Glu-322 is (7Z)-ophiobola-7,19-dien-3-ol synthase. 2 residues coordinate Mg(2+): Asp-93 and Asp-97. Asp-93 is a substrate binding site. The short motif at Asp-93–Asp-97 is the DDXXD 1 element. Residues Arg-182–Asp-185, Asn-226, Ser-230–Glu-234, and Arg-313–Tyr-314 each bind substrate. Positions Asn-226–Glu-234 match the NSE/DTE motif. The geranylfarnesyl diphosphate synthase stretch occupies residues Leu-323–Val-725. Residues Gly-362–Ile-388 form a disordered region. A compositionally biased stretch (basic and acidic residues) spans Ser-373 to Arg-382. Residues Lys-436, Arg-439, and His-468 each coordinate isopentenyl diphosphate. Residues Asp-475 and Asp-479 each coordinate Mg(2+). The DDXXD 2 motif lies at Asp-475–Asp-479. Arg-484 contacts dimethylallyl diphosphate. Arg-485 lines the isopentenyl diphosphate pocket. Positions 562, 563, 601, 608, 618, and 628 each coordinate dimethylallyl diphosphate.

It in the N-terminal section; belongs to the terpene synthase family. This sequence in the C-terminal section; belongs to the FPP/GGPP synthase family. Mg(2+) serves as cofactor.

It catalyses the reaction isopentenyl diphosphate + (2E,6E)-farnesyl diphosphate = (2E,6E,10E)-geranylgeranyl diphosphate + diphosphate. It carries out the reaction isopentenyl diphosphate + (2E,6E,10E)-geranylgeranyl diphosphate = (2E,6E,10E,14E)-geranylfarnesyl diphosphate + diphosphate. The enzyme catalyses (2E,6E,10E,14E)-geranylfarnesyl diphosphate + H2O = ophiobolin F + diphosphate. It participates in secondary metabolite biosynthesis; terpenoid biosynthesis. Functionally, bifunctional sesterterpene synthase that converts isopentenyl diphosphate (IPP) and dimethylallyl diphosphate (DMAPP) into ophiobolin F. The C-terminal prenyltransferase (PT) domain of AcldOS converts isopentenyl diphosphate and dimethylallyl diphosphate into geranylfarnesyl diphosphate (GFPP), whereas the N-terminal terpene cyclase (TC) domain catalyzes the cyclization of GFPP to ophiobolin F. The protein is Ophiobolin F synthase of Aspergillus calidoustus.